The following is a 388-amino-acid chain: Succinate--CoA ligase [ADP-forming] subunit beta (388 aa).

The ATP-grasp domain maps to 9-244 (KQLFARYGLP…PSQEDSREAH (236 aa)). Residues Lys46, 53–55 (GRG), Glu99, Thr102, and Glu107 contribute to the ATP site. 2 residues coordinate Mg(2+): Asn199 and Asp213. Substrate contacts are provided by residues Asn264 and 321–323 (GIV).

The protein belongs to the succinate/malate CoA ligase beta subunit family. In terms of assembly, heterotetramer of two alpha and two beta subunits. The cofactor is Mg(2+).

It catalyses the reaction succinate + ATP + CoA = succinyl-CoA + ADP + phosphate. The catalysed reaction is GTP + succinate + CoA = succinyl-CoA + GDP + phosphate. It participates in carbohydrate metabolism; tricarboxylic acid cycle; succinate from succinyl-CoA (ligase route): step 1/1. Functionally, succinyl-CoA synthetase functions in the citric acid cycle (TCA), coupling the hydrolysis of succinyl-CoA to the synthesis of either ATP or GTP and thus represents the only step of substrate-level phosphorylation in the TCA. The beta subunit provides nucleotide specificity of the enzyme and binds the substrate succinate, while the binding sites for coenzyme A and phosphate are found in the alpha subunit. The protein is Succinate--CoA ligase [ADP-forming] subunit beta of Erwinia tasmaniensis (strain DSM 17950 / CFBP 7177 / CIP 109463 / NCPPB 4357 / Et1/99).